Consider the following 78-residue polypeptide: MTASILQQSVVDADFRAALLENPAAFGASAAALPTPVEAQDQASLDFWTKDIAATEAFACRQSCSFGPFTFVCDGNTK.

A propeptide spanning residues 1 to 59 (MTASILQQSVVDADFRAALLENPAAFGASAAALPTPVEAQDQASLDFWTKDIAATEAFA) is cleaved from the precursor. 2 cross-links (beta-methyllanthionine (Cys-Thr)) span residues 60 to 77 (CRQSCSFGPFTFVCDGNT) and 64 to 70 (CSFGPFT). The segment at residues 63-73 (SCSFGPFTFVC) is a cross-link (lanthionine (Ser-Cys)). A cross-link (lysinoalanine (Ser-Lys)) is located at residues 65–78 (SFGPFTFVCDGNTK). A (3R)-3-hydroxyaspartate modification is found at aspartate 74.

This sequence belongs to the type B lantibiotic family. Maturation of lantibiotics involves the enzymatic conversion of Thr, and Ser into dehydrated AA and the formation of thioether bonds with cysteine or the formation of dialkylamine bonds with lysine. This is followed by membrane translocation and cleavage of the modified precursor.

In terms of biological role, can act as inhibitor of the enzyme phospholipase A2, and of the angiotensin-converting enzyme. Shows inhibitory activities against herpes simplex virus and immunopotentiating activities. Its antimicrobial activities are not very pronounced. The polypeptide is Lantibiotic cinnamycin (cinA) (Streptomyces griseoverticillatus (Streptoverticillium griseoverticillatum)).